A 447-amino-acid polypeptide reads, in one-letter code: Tubulin beta chain (447 aa).

The GTP site is built by glutamine 11, glutamate 69, serine 138, glycine 142, threonine 143, glycine 144, asparagine 204, and asparagine 226. Glutamate 69 is a Mg(2+) binding site. The disordered stretch occupies residues 424–447 (QYQDASISEGEEDYEEEPQVENEE). The span at 432 to 447 (EGEEDYEEEPQVENEE) shows a compositional bias: acidic residues.

Belongs to the tubulin family. Dimer of alpha and beta chains. A typical microtubule is a hollow water-filled tube with an outer diameter of 25 nm and an inner diameter of 15 nM. Alpha-beta heterodimers associate head-to-tail to form protofilaments running lengthwise along the microtubule wall with the beta-tubulin subunit facing the microtubule plus end conferring a structural polarity. Microtubules usually have 13 protofilaments but different protofilament numbers can be found in some organisms and specialized cells. Mg(2+) is required as a cofactor.

It is found in the cytoplasm. The protein localises to the cytoskeleton. Functionally, tubulin is the major constituent of microtubules, a cylinder consisting of laterally associated linear protofilaments composed of alpha- and beta-tubulin heterodimers. Microtubules grow by the addition of GTP-tubulin dimers to the microtubule end, where a stabilizing cap forms. Below the cap, tubulin dimers are in GDP-bound state, owing to GTPase activity of alpha-tubulin. The protein is Tubulin beta chain of Uncinula necator (Grape powdery mildew).